The primary structure comprises 204 residues: dITP/XTP pyrophosphatase (204 aa).

Residue 8–13 coordinates substrate; it reads TKNAGK. The active-site Proton acceptor is Asp-70. Mg(2+) is bound at residue Asp-70. Substrate-binding positions include Ser-71, 153-156, Lys-176, and 181-182; these read FGYD and HR.

Belongs to the HAM1 NTPase family. In terms of assembly, homodimer. It depends on Mg(2+) as a cofactor.

It carries out the reaction XTP + H2O = XMP + diphosphate + H(+). It catalyses the reaction dITP + H2O = dIMP + diphosphate + H(+). The enzyme catalyses ITP + H2O = IMP + diphosphate + H(+). Functionally, pyrophosphatase that catalyzes the hydrolysis of nucleoside triphosphates to their monophosphate derivatives, with a high preference for the non-canonical purine nucleotides XTP (xanthosine triphosphate), dITP (deoxyinosine triphosphate) and ITP. Seems to function as a house-cleaning enzyme that removes non-canonical purine nucleotides from the nucleotide pool, thus preventing their incorporation into DNA/RNA and avoiding chromosomal lesions. The polypeptide is dITP/XTP pyrophosphatase (Geobacillus kaustophilus (strain HTA426)).